The following is a 3224-amino-acid chain: MRRSKADVERYIASVQGSTPSPRQKSIKGFYFAKLYYEAKEYDLAKKYICTYINVQERDPKAHRFLGLLYELEENTDKAVECYRRSVELNPTQKDLVLKIAELLCKNDVTDGRAKYWVERAAKLFPGSPAVYKLKEQLLDCEGEDGWNKLFDLIQSELYVRPDDVHVNIRLVEVYRSTKRLKDAVAHCHEAERNIALRSSLEWNSCVVQTLKEYLESLQCLESDKSDWRATNTDLLLAYANLMLLTLSTRDVQESRELLESFDSALQSVKSLGGNDELSATFLEMKGHFYMHAGSLLLKMGQHSSNVQWRALSELAALCYLIAFQVPRPKIKLIKGEAGQNLLEMMACDRLSQSGHMLLNLSRGKQDFLREIVETFANKSGQSALYDALFSSQSPKDTSFLGSDDIGNIDVREPELEDLARYDVGAIRAHDGSLQHLTWLGLQWNSLPALPGIRKWLKQLFHHLPQETSRLETNAPESICILDLEVFLLGVVYTSHLQLKEKCNSHHSSYQPLCLPLPVCKQLCTERQKSWWDAVCTLIHRKAVPGNAAKLRLLVQHEINTLRAQEKHGLQPALLVHWAKCLQKTGSGLNSFYDQREYIGRSVHYWKKVLPLLKIIKKKNSIPEPIDPLFKHFHSVDIQASEIVEYEEDAHITFAILDVVNGNIEDAMTAFESIQSVVSYWNLALIFHRKAEDIENDALSPEEQEECKNYLRKTRDYLIKIIDDSDSNLSVVKKLPVPLESVKEMLKSVMQELEAYSEGGPLYTNGSLRNADSEIKHSTPSHTRYSLSPSKSYKYSPKTPPRWAEDQNSLLKMICQQVEAIKKEMQELKLNSSNSASPHRWPTENYGPDSVPDGYQGSQTFHGAPLTVATTGPSVYYSQSPAYNSQYLLRPAANVTPTKGPVYGMNRLPPQQHIYAYPQQMHTPPVQSSSACMFSQEMYGPPALRFESPATGILSPRGDDYFNYNVQQTSTNPPLPEPGYFTKPPIAAHASRSAESKTIEFGKTNFVQPMPGEGLRPSLPTQAHTTQPTPFKFNSNFKSNDGDFTFSSPQVVTQPPPAAYSNSESLLGLLTSDKPLQGDGYSGAKPIPGGQTIGPRNTFNFGSKNVSGISFTENMGSSQQKNSGFRRSDDMFTFHGPGKSVFGTPTLETANKNHETDGGSAHGDDDDDGPHFEPVVPLPDKIEVKTGEEDEEEFFCNRAKLFRFDVESKEWKERGIGNVKILRHKTSGKIRLLMRREQVLKICANHYISPDMKLTPNAGSDRSFVWHALDYADELPKPEQLAIRFKTPEEAALFKCKFEEAQSILKAPGTNVATASNQAVRIVKEPTSHDNKDICKSDAGNLNFEFQFAKKEGSWWHCNSCSLKNASTAKKCVSCQNLNPSNKELVGPPLAETVFTPKTSPENVQDRFALVTPKKEGHWDCSICLVRNEPTVSRCIACQNTKSANKSGSSFVHQASFKFGQGDLPKPINSDFRSVFSTKEGQWDCSACLVQNEGSSTKCAACQNPRKQSLPATSIPTPASFKFGTSETSKTLKSGFEDMFAKKEGQWDCSSCLVRNEANATRCVACQNPDKPSPSTSVPAPASFKFGTSETSKAPKSGFEGMFTKKEGQWDCSVCLVRNEASATKCVACQNPGKQNQTTSAVSTPASSETSRAPKSGFEGMFTKKEGQWDCSVCLVRNEASATKCIACQSPGKQNQTTSAVSTPASSETSKAPKSGFEGMFTKKEGQWDCSVCLVRNEASATKCIACQCPSKQNQTTAISTPASSEISKAPKSGFEGMFIRKGQWDCSVCCVQNESSSLKCVACDASKPTHKPIAEAPSAFTLGSEMKLHDSPGSQVGTGFKSNFSEKASKFGNTEQGFKFGHVDQENSPSFMFQGSSNTEFKSTKEGFSIPVSADGFKFGISEPGNQEKKSEKPLENDTGFQAQDISGQKNGSGVIFGQTSSTFTFADLAKSTSGEGFQFGKKDPNFKGFSGAGEKLFSSQYGKMANKANTSGDFEKDDDAYKTEDSDDIHFEPVVQMPEKVELVTGEEDEKVLYSQRVKLFRFDAEVSQWKERGLGNLKILKNEVNGKLRMLMRREQVLKVCANHWITTTMNLKPLSGSDRAWMWLASDFSDGDAKLEQLAAKFKTPELAEEFKQKFEECQRLLLDIPLQTPHKLVDTGRAAKLIQRAEEMKSGLKDFKTFLTNDQTKVTEEENKGSGTGAAGASDTTIKPNPENTGPTLEWDNYDLREDALDDSVSSSSVHASPLASSPVRKNLFRFGESTTGFNFSFKSALSPSKSPGKLNQSGTSVGTDEESDVTQEEERDGQYFEPVVPLPDLVEVSSGEENEQVVFSHRAKLYRYDKDVGQWKERGIGDIKILQNYDNKQVRIVMRRDQVLKLCANHRITPDMTLQNMKGTERVWLWTAYDFADGERKVEHLAVRFKLQDVADSFKKIFDEAKTAQEKDSLITPHVSRSSTPRESPCGKIAVAVLEETTRERTDVTQGDDVADAASEVEVSSTSETTTKAVVSPPKFVFGSESVKSIFSSEKSKPFAFGNTSATGSLFGFSFNAPLKSNNSETSSVAQSGSESKVEPNKCELSKNSDIEQSSDSKVKNLSASFPTEESSINYTFKTPEKAKEKKKPEDSPSDDDVLIVYELTPTAEQKALATKLKLPPTFFCYKNRPDYVSEEEEDDEDFETAVKKLNGKLYLEGSEKCRPLEENTADNEKECIIVWEKKPTVEEKAKADTLKLPPTFFCGVCSDTDEDNGNGEDFQSELQKVQEAQKSQTEEITSTTDSVYTGGTEVMVPSFCKSEEPDSITKSISSPSVSSETMDKPVDLSTRKEIDTDSTSQGESKIVSFGFGSSTGLSFADLASSNSGDFAFGSKDKNFQWANTGAAVFGTQSVGTQSAGKVGEDEDGSDEEVVHNEDIHFEPIVSLPEVEVKSGEEDEEILFKERAKLYRWDRDVSQWKERGVGDIKILWHTMKNYYRILMRRDQVFKVCANHVITKTMELKPLNVSNNALVWTASDYADGEAKVEQLAVRFKTKEVADCFKKTFEECQQNLMKLQKGHVSLAAELSKETNPVVFFDVCADGEPLGRITMELFSNIVPRTAENFRALCTGEKGFGFKNSIFHRVIPDFVCQGGDITKHDGTGGQSIYGDKFEDENFDVKHTGPGLLSMANQGQNTNNSQFFITLKKAELLDFKHVVFGFVKDGMDTVKKIESFGSPKGSVCRRITITECGQI.

Thr-19 bears the Phosphothreonine mark. At Ser-21 the chain carries Phosphoserine. TPR repeat units follow at residues Ser-26–Asp-59, Pro-60–Gln-93, Lys-94–Ser-128, Val-165–Leu-201, Gly-287–Cys-319, Gln-583–Ile-616, and Glu-648–Trp-681. The interval Ser-767–Arg-802 is disordered. Thr-779 is subject to Phosphothreonine. A phosphoserine mark is found at Ser-781, Ser-788, and Ser-837. Residues Tyr-785 to Pro-797 are compositionally biased toward low complexity. An Asymmetric dimethylarginine modification is found at Arg-945. 2 positions are modified to phosphoserine: Ser-948 and Ser-955. Residues Phe-1001–Gly-1002 form repeat 1. The segment at Phe-1001–Gly-3206 is 22 X 2 AA repeats of F-G. Position 1016 is an asymmetric dimethylarginine; alternate (Arg-1016). Position 1016 is an omega-N-methylarginine; alternate (Arg-1016). Thr-1098 is modified (phosphothreonine). Repeat 2 spans residues Phe-1101–Gly-1102. Ser-1103, Ser-1107, and Ser-1110 each carry phosphoserine. Positions Gly-1138–Pro-1174 are disordered. The stretch at Phe-1142 to Gly-1143 is repeat 3. Position 1144 is a phosphothreonine (Thr-1144). Ser-1160 and Ser-1249 each carry phosphoserine. A RanBD1 1 domain is found at His-1171–Ala-1307. Lys-1350 participates in a covalent cross-link: Glycyl lysine isopeptide (Lys-Gly) (interchain with G-Cter in SUMO2). The segment at Lys-1351–Ser-1381 adopts a RanBP2-type 1 zinc-finger fold. Residues Thr-1396 and Thr-1412 each carry the phosphothreonine modification. Residue Lys-1414 forms a Glycyl lysine isopeptide (Lys-Gly) (interchain with G-Cter in SUMO2) linkage. The RanBP2-type 2 zinc finger occupies Lys-1415–Ala-1444. Phosphoserine occurs at positions 1443, 1450, and 1456. The stretch at Phe-1459–Gly-1460 is repeat 4. The RanBP2-type 3 zinc finger occupies Lys-1479–Gln-1508. 2 positions are modified to phosphoserine: Ser-1509 and Ser-1520. Residues Phe-1523–Gly-1524 form repeat 5. A RanBP2-type 4 zinc finger spans residues Lys-1543–Pro-1572. Residues Pro-1569–Pro-1595 form a disordered region. At Ser-1573 the chain carries Phosphoserine. Residues Ser-1573–Ser-1583 are compositionally biased toward low complexity. The stretch at Phe-1586–Gly-1587 is repeat 6. Lys-1596 participates in a covalent cross-link: Glycyl lysine isopeptide (Lys-Gly) (interchain with G-Cter in SUMO2). Lys-1605 participates in a covalent cross-link: Glycyl lysine isopeptide (Lys-Gly) (interchain with G-Cter in SUMO1); alternate. Lys-1605 participates in a covalent cross-link: Glycyl lysine isopeptide (Lys-Gly) (interchain with G-Cter in SUMO2); alternate. Residues Lys-1606–Gln-1635 form a RanBP2-type 5 zinc finger. The span at Pro-1632–Ala-1653 shows a compositional bias: polar residues. A disordered region spans residues Pro-1632–Gly-1657. Lys-1655 is covalently cross-linked (Glycyl lysine isopeptide (Lys-Gly) (interchain with G-Cter in SUMO2)). Lys-1664 is covalently cross-linked (Glycyl lysine isopeptide (Lys-Gly) (interchain with G-Cter in SUMO1); alternate). A Glycyl lysine isopeptide (Lys-Gly) (interchain with G-Cter in SUMO2); alternate cross-link involves residue Lys-1664. The RanBP2-type 6 zinc-finger motif lies at Lys-1665 to Gln-1694. Positions Pro-1691–Ala-1712 are enriched in polar residues. The tract at residues Pro-1691–Gly-1716 is disordered. Residue Lys-1714 forms a Glycyl lysine isopeptide (Lys-Gly) (interchain with G-Cter in SUMO2) linkage. A Glycyl lysine isopeptide (Lys-Gly) (interchain with G-Cter in SUMO1); alternate cross-link involves residue Lys-1723. Residue Lys-1723 forms a Glycyl lysine isopeptide (Lys-Gly) (interchain with G-Cter in SUMO2); alternate linkage. 2 RanBP2-type zinc fingers span residues Lys-1724–Gln-1753 and Arg-1781–Thr-1810. A Phosphoserine modification is found at Ser-1835. A run of 2 repeats spans residues Phe-1852–Gly-1853 and Phe-1861–Gly-1862. 2 positions are modified to phosphoserine: Ser-1869 and Ser-1871. 3 repeat units span residues Phe-1900–Gly-1901, Phe-1938–Gly-1939, and Phe-1961–Gly-1962. Lys-1977 carries the N6-acetyllysine modification. Residue Thr-2005 is modified to Phosphothreonine. A Phosphoserine modification is found at Ser-2008. Residues His-2012–Asp-2148 form the RanBD1 2 domain. Residue Lys-2022 forms a Glycyl lysine isopeptide (Lys-Gly) (interchain with G-Cter in SUMO2) linkage. The segment at Leu-2147 to Ser-2287 is interaction with BICD2. A Phosphothreonine modification is found at Thr-2153. Positions Gln-2188–Trp-2224 are disordered. A compositionally biased stretch (polar residues) spans Ile-2211–Pro-2220. Residues Ser-2246 and Ser-2251 each carry the phosphoserine modification. The stretch at Phe-2260–Gly-2261 is repeat 12. A phosphoserine mark is found at Ser-2270, Ser-2280, and Ser-2290. Residues Ala-2274 to Gly-2292 show a composition bias toward polar residues. A disordered region spans residues Ala-2274–Gly-2307. Residue Thr-2293 is modified to Phosphothreonine. The segment covering Thr-2293–Arg-2305 has biased composition (acidic residues). Ser-2297 is modified (phosphoserine). The RanBD1 3 domain maps to Tyr-2309–Lys-2445. A phosphoserine mark is found at Ser-2462, Ser-2493, and Ser-2510. The stretch at Phe-2516–Gly-2517 is repeat 13. Lys-2522 participates in a covalent cross-link: Glycyl lysine isopeptide (Lys-Gly) (interchain with G-Cter in SUMO2). Ser-2526 bears the Phosphoserine mark. Tandem repeats lie at residues Phe-2535–Gly-2536 and Phe-2545–Gly-2546. Residues Asn-2556–Glu-2569 are compositionally biased toward polar residues. A disordered region spans residues Asn-2556–Asp-2629. Residues Ser-2570–Val-2593 show a composition bias toward basic and acidic residues. A Glycyl lysine isopeptide (Lys-Gly) (interchain with G-Cter in SUMO) cross-link involves residue Lys-2592. Lys-2594 is covalently cross-linked (Glycyl lysine isopeptide (Lys-Gly) (interchain with G-Cter in SUMO1); alternate). Lys-2594 is covalently cross-linked (Glycyl lysine isopeptide (Lys-Gly) (interchain with G-Cter in SUMO2); alternate). Polar residues predominate over residues Lys-2594 to Phe-2611. Lys-2612 participates in a covalent cross-link: Glycyl lysine isopeptide (Lys-Gly) (interchain with G-Cter in SUMO2). Thr-2613 carries the phosphothreonine modification. Positions Thr-2613–Asp-2625 are enriched in basic and acidic residues. The tract at residues Asp-2631–Val-2635 is interaction with sumoylated RANGAP1. 2 tandem repeats follow at residues Leu-2633–Asn-2685 and Ile-2711–Gln-2761. Residues Leu-2633–Asn-2685 are interaction with UBE2I. The tract at residues Leu-2633–Cys-2710 is required for E3 SUMO-ligase activity. The tract at residues Leu-2633 to Gln-2761 is 2 X 50 AA approximate repeats. Tyr-2666 carries the phosphotyrosine modification. Phosphoserine occurs at positions 2668 and 2741. The segment at Gly-2686 to Gln-2761 is interaction with SUMO1. Thr-2743 carries the phosphothreonine modification. The segment at Cys-2791–Asp-2818 is disordered. Lys-2792 participates in a covalent cross-link: Glycyl lysine isopeptide (Lys-Gly) (interchain with G-Cter in SUMO2). The segment covering Ile-2799–Ser-2810 has biased composition (low complexity). Ser-2805 carries the post-translational modification Phosphoserine. Residue Lys-2815 forms a Glycyl lysine isopeptide (Lys-Gly) (interchain with G-Cter in SUMO2) linkage. 4 consecutive repeat copies span residues Phe-2840–Gly-2841, Phe-2842–Gly-2843, Phe-2863–Gly-2864, and Phe-2880–Gly-2881. The residue at position 2900 (Ser-2900) is a Phosphoserine. The region spanning His-2911 to Lys-3046 is the RanBD1 4 domain. Residues Phe-3067–Gln-3223 form the PPIase cyclophilin-type domain. Tandem repeats lie at residues Phe-3106–Gly-3107, Phe-3189–Gly-3190, and Phe-3205–Gly-3206. Ser-3207 is subject to Phosphoserine.

This sequence belongs to the RanBP2 E3 ligase family. As to quaternary structure, part of the nuclear pore complex. Forms a complex with NXT1, NXF1 and RANGAP1. Forms a tight complex with RANBP1 and UBE2I. Interacts with SUMO1 but not SUMO2. Interacts with PRKN. Interacts with sumoylated RANGAP1. Interacts with CDCA8. Interacts with PML (isoform PML-4). Interacts with BICD2. Interacts with MCM3AP isoform GANP. Interacts with COX11. Interacts with synaptic plasticity regulator PANTS. In terms of processing, polyubiquitinated by PRKN, which leads to proteasomal degradation. The inner channel of the NPC has a different redox environment from the cytoplasm and allows the formation of interchain disulfide bonds between some nucleoporins, the significant increase of these linkages upon oxidative stress reduces the permeability of the NPC.

It localises to the nucleus. The protein localises to the nucleus membrane. Its subcellular location is the nuclear pore complex. The protein resides in the nucleus envelope. The protein operates within protein modification; protein sumoylation. E3 SUMO-protein ligase which facilitates SUMO1 and SUMO2 conjugation by UBE2I. Involved in transport factor (Ran-GTP, karyopherin)-mediated protein import via the F-G repeat-containing domain which acts as a docking site for substrates. Component of the nuclear export pathway. Specific docking site for the nuclear export factor exportin-1. Inhibits EIF4E-dependent mRNA export. Sumoylates PML at 'Lys-490' which is essential for the proper assembly of PML-NB. Recruits BICD2 to the nuclear envelope and cytoplasmic stacks of nuclear pore complex known as annulate lamellae during G2 phase of cell cycle. Binds single-stranded RNA (in vitro). Probable inactive PPIase with no peptidyl-prolyl cis-trans isomerase activity. In Pan troglodytes (Chimpanzee), this protein is E3 SUMO-protein ligase RanBP2 (RANBP2).